A 127-amino-acid chain; its full sequence is Ribosome-binding factor A (127 aa).

It belongs to the RbfA family. In terms of assembly, monomer. Binds 30S ribosomal subunits, but not 50S ribosomal subunits or 70S ribosomes.

It is found in the cytoplasm. Its function is as follows. One of several proteins that assist in the late maturation steps of the functional core of the 30S ribosomal subunit. Associates with free 30S ribosomal subunits (but not with 30S subunits that are part of 70S ribosomes or polysomes). Required for efficient processing of 16S rRNA. May interact with the 5'-terminal helix region of 16S rRNA. The polypeptide is Ribosome-binding factor A (Stenotrophomonas maltophilia (strain K279a)).